The sequence spans 220 residues: Ribonuclease HII (220 aa).

The region spanning 32 to 220 (KHIVGIDEAG…FAPIKGRYSV (189 aa)) is the RNase H type-2 domain. Residues aspartate 38, glutamate 39, and aspartate 130 each coordinate a divalent metal cation.

It belongs to the RNase HII family. It depends on Mn(2+) as a cofactor. Requires Mg(2+) as cofactor.

The protein resides in the cytoplasm. It catalyses the reaction Endonucleolytic cleavage to 5'-phosphomonoester.. Endonuclease that specifically degrades the RNA of RNA-DNA hybrids. This chain is Ribonuclease HII, found in Brucella anthropi (strain ATCC 49188 / DSM 6882 / CCUG 24695 / JCM 21032 / LMG 3331 / NBRC 15819 / NCTC 12168 / Alc 37) (Ochrobactrum anthropi).